The primary structure comprises 146 residues: MRNEMNLSFSAQSQNESFARVTVGAFIAQLDPTMDEMTEIKTVVSEAVTNAIIHGYQGQPDGVVYIHASIDQGVFELTIRDEGMGISDVEEARQPLYTTKPELERSGMGFTIMENFMDEVKVVSEPMIGTTVFLKKHLTKSKAICN.

This sequence belongs to the anti-sigma-factor family.

The enzyme catalyses L-seryl-[protein] + ATP = O-phospho-L-seryl-[protein] + ADP + H(+). It carries out the reaction L-threonyl-[protein] + ATP = O-phospho-L-threonyl-[protein] + ADP + H(+). Binds to sigma F and blocks its ability to form an RNA polymerase holoenzyme (E-sigma F). Phosphorylates SpoIIAA on a serine residue. This phosphorylation may enable SpoIIAA to act as an anti-anti-sigma factor that counteracts SpoIIAB and thus releases sigma F from inhibition. In Halalkalibacterium halodurans (strain ATCC BAA-125 / DSM 18197 / FERM 7344 / JCM 9153 / C-125) (Bacillus halodurans), this protein is Anti-sigma F factor.